The chain runs to 411 residues: Epoxyqueuosine reductase (411 aa).

The Proton donor role is filled by aspartate 171. Residues leucine 213–threonine 245 enclose the 4Fe-4S ferredoxin-type domain. [4Fe-4S] cluster is bound by residues cysteine 225, cysteine 228, cysteine 231, cysteine 235, cysteine 251, cysteine 278, cysteine 281, and cysteine 285.

This sequence belongs to the QueG family. Monomer. Cob(II)alamin is required as a cofactor. [4Fe-4S] cluster serves as cofactor.

It localises to the cytoplasm. It catalyses the reaction epoxyqueuosine(34) in tRNA + AH2 = queuosine(34) in tRNA + A + H2O. The protein operates within tRNA modification; tRNA-queuosine biosynthesis. Functionally, catalyzes the conversion of epoxyqueuosine (oQ) to queuosine (Q), which is a hypermodified base found in the wobble positions of tRNA(Asp), tRNA(Asn), tRNA(His) and tRNA(Tyr). This Yersinia pestis protein is Epoxyqueuosine reductase.